Reading from the N-terminus, the 400-residue chain is CCA-adding enzyme (400 aa).

The ATP site is built by Gly28 and Arg31. Gly28 and Arg31 together coordinate CTP. Mg(2+)-binding residues include Asp41 and Asp43. ATP-binding residues include Arg112, Asp155, Arg158, Arg161, and Arg164. CTP contacts are provided by Arg112, Asp155, Arg158, Arg161, and Arg164.

Belongs to the tRNA nucleotidyltransferase/poly(A) polymerase family. Bacterial CCA-adding enzyme type 3 subfamily. Homodimer. Mg(2+) serves as cofactor.

The enzyme catalyses a tRNA precursor + 2 CTP + ATP = a tRNA with a 3' CCA end + 3 diphosphate. The catalysed reaction is a tRNA with a 3' CCA end + 2 CTP + ATP = a tRNA with a 3' CCACCA end + 3 diphosphate. In terms of biological role, catalyzes the addition and repair of the essential 3'-terminal CCA sequence in tRNAs without using a nucleic acid template. Adds these three nucleotides in the order of C, C, and A to the tRNA nucleotide-73, using CTP and ATP as substrates and producing inorganic pyrophosphate. tRNA 3'-terminal CCA addition is required both for tRNA processing and repair. Also involved in tRNA surveillance by mediating tandem CCA addition to generate a CCACCA at the 3' terminus of unstable tRNAs. While stable tRNAs receive only 3'-terminal CCA, unstable tRNAs are marked with CCACCA and rapidly degraded. In Oceanobacillus iheyensis (strain DSM 14371 / CIP 107618 / JCM 11309 / KCTC 3954 / HTE831), this protein is CCA-adding enzyme.